Here is a 99-residue protein sequence, read N- to C-terminus: Nucleoid-associated protein SEQ_0368 (99 aa).

It belongs to the YbaB/EbfC family. In terms of assembly, homodimer.

It localises to the cytoplasm. It is found in the nucleoid. Its function is as follows. Binds to DNA and alters its conformation. May be involved in regulation of gene expression, nucleoid organization and DNA protection. This chain is Nucleoid-associated protein SEQ_0368, found in Streptococcus equi subsp. equi (strain 4047).